The sequence spans 570 residues: Zinc finger and BTB domain-containing protein 44 (570 aa).

A Glycyl lysine isopeptide (Lys-Gly) (interchain with G-Cter in SUMO2) cross-link involves residue Lys-4. The BTB domain occupies 31 to 98 (CDITIRVQDK…AYTATLSINT (68 aa)). A phosphoserine mark is found at Ser-135, Ser-159, Ser-161, Ser-165, Ser-191, and Ser-194. Disordered regions lie at residues 194–220 (SPVK…NRNQ) and 243–267 (EKVK…RRMA). Residues 199-220 (GTQTSSPQVLNSSASYSENRNQ) are compositionally biased toward polar residues. Thr-200 is subject to Phosphothreonine. Lys-290 is covalently cross-linked (Glycyl lysine isopeptide (Lys-Gly) (interchain with G-Cter in SUMO2)). Residues 295 to 369 (SDEEVHEEVS…NAPPDDDDRL (75 aa)) form a disordered region. The segment covering 304–318 (SQPVSASQSSLSDQQ) has biased composition (low complexity). A compositionally biased stretch (polar residues) spans 352 to 361 (TLQSTSSTNA). C2H2-type zinc fingers lie at residues 399-421 (FQCP…MLIH), 427-449 (FQCD…RLKH), 455-479 (FRCQ…VSRH), and 487-511 (YECK…SLNH).

Its subcellular location is the nucleus. Its function is as follows. May be involved in transcriptional regulation. In Homo sapiens (Human), this protein is Zinc finger and BTB domain-containing protein 44 (ZBTB44).